Reading from the N-terminus, the 178-residue chain is ATP synthase subunit delta (178 aa).

This sequence belongs to the ATPase delta chain family. As to quaternary structure, F-type ATPases have 2 components, F(1) - the catalytic core - and F(0) - the membrane proton channel. F(1) has five subunits: alpha(3), beta(3), gamma(1), delta(1), epsilon(1). F(0) has three main subunits: a(1), b(2) and c(10-14). The alpha and beta chains form an alternating ring which encloses part of the gamma chain. F(1) is attached to F(0) by a central stalk formed by the gamma and epsilon chains, while a peripheral stalk is formed by the delta and b chains.

It is found in the cell membrane. F(1)F(0) ATP synthase produces ATP from ADP in the presence of a proton or sodium gradient. F-type ATPases consist of two structural domains, F(1) containing the extramembraneous catalytic core and F(0) containing the membrane proton channel, linked together by a central stalk and a peripheral stalk. During catalysis, ATP synthesis in the catalytic domain of F(1) is coupled via a rotary mechanism of the central stalk subunits to proton translocation. Functionally, this protein is part of the stalk that links CF(0) to CF(1). It either transmits conformational changes from CF(0) to CF(1) or is implicated in proton conduction. The polypeptide is ATP synthase subunit delta (Streptococcus mutans serotype c (strain ATCC 700610 / UA159)).